Consider the following 577-residue polypeptide: MRGFTYLSKVLHSHSSYSKLLVLCSVSTGGLLVYAESNVESGKQVVEQNQPESKKKRVVVLGTGWGGTSFLKDVDISSYDVQVVSPRNYFAFTPLLPSVTCGTVEARSIVEPVRNIIKKRSGEIQFWEAECLKIDPVNRTVSCRSGINDNLAGHNDFSLQYDYLVVAVGAQVNTFNTPGVMEHCHFLKEVEDAQRIRRTVIDCFEKSVIPGLSEEERRTNLHFVIVGGGPTGVEFAAELHDYVYEDLVKIYPSVKDFVKITVIQSGDHILNTFDERISSFAEQKFQRDGIEVSTGCRVTSVSDHFINMKVKSTGKHVEVPYGMVVWSTGVGTRPFVKDFMEQVGQEKRRILATDEWLRVKGCSNVYALGDCASVDQHKVMEDISTIFEAADKDDSGTLSVEEFRDVLEDIIIRYPQVDLYLKNKHLLEAKDLFRDSEGNEREEVDIEGFKLALSHVDSQMKSLPATAQVAAQQGTYLARCLNRWDQCKSNPEGPRRFKSSGRHEFLPFEYRHLGQFAPLGGDQAAAELPGDWVSMGHSTQWLWYSVYASKQVSWRTRYLVVGDWVRRYIFGRDSSRI.

The transit peptide at 1–35 (MRGFTYLSKVLHSHSSYSKLLVLCSVSTGGLLVYA) directs the protein to the mitochondrion. Position 57 to 87 (57 to 87 (RVVVLGTGWGGTSFLKDVDISSYDVQVVSPR)) interacts with FAD. An NAD(+)-binding site is contributed by 221–257 (LHFVIVGGGPTGVEFAAELHDYVYEDLVKIYPSVKDF). Residues 378-413 (KVMEDISTIFEAADKDDSGTLSVEEFRDVLEDIIIR) enclose the EF-hand domain. Ca(2+) contacts are provided by aspartate 391, aspartate 393, serine 395, threonine 397, and glutamate 402. Positions 568 to 577 (YIFGRDSSRI) match the Microbody targeting signal motif.

Belongs to the NADH dehydrogenase family. FAD serves as cofactor.

It localises to the mitochondrion inner membrane. Its subcellular location is the peroxisome. It carries out the reaction a quinone + NADH + H(+) = a quinol + NAD(+). The enzyme catalyses a ubiquinone + NADH + H(+) = a ubiquinol + NAD(+). Activity is calcium-dependent with a more pronounced effect at higher pH. Its function is as follows. Calcium-dependent NAD(P)H dehydrogenase. Binds calcium ions. Alternative NADH-ubiquinone oxidoreductase which catalyzes the oxidation of mitochondrial NADH does not translocate protons across the inner mitochondrial membrane. This Solanum tuberosum (Potato) protein is External alternative NAD(P)H-ubiquinone oxidoreductase B1, mitochondrial (NDB1).